We begin with the raw amino-acid sequence, 130 residues long: Calcium-binding protein KRP1 (130 aa).

An EF-hand domain is found at 72–107 (LTDEDVRCMIKEGDFDCDGALNQMEFCVLMFRLSPD). Residues Asp-85, Asp-87, Asp-89, and Glu-96 each contribute to the Ca(2+) site.

In terms of biological role, potential calcium sensor that binds calcium in vitro. The polypeptide is Calcium-binding protein KRP1 (Arabidopsis thaliana (Mouse-ear cress)).